A 254-amino-acid chain; its full sequence is MQTIQLIIFVAFVLSRAAASISSFSDPTSIVNINHDANRLSRALAAGQNQTQRSLRQHEGEDRGAIDKADEVVSKMKALMGTAKNVPNNLAALIAKRSKTAGEFVRRPFLVSKLSKRYNIADQLSFSTLKQLDKIDNMRIVDIKNGIKGNKKTPNGMRRKIKHFEGMKTAPQKFLESHVGRDMQRYGKDGSRWLSAGVVTRTTDQGERQILLISSSNPARGDFLLPKGGWDRGEKIKKAALREVMEEGGVCRAL.

The first 19 residues, 1–19 (MQTIQLIIFVAFVLSRAAA), serve as a signal peptide directing secretion. N49 is a glycosylation site (N-linked (GlcNAc...) asparagine). The RxLR-dEER motif lies at 53-63 (RSLRQHEGEDR). In terms of domain architecture, Nudix hydrolase spans 191 to 254 (SRWLSAGVVT…MEEGGVCRAL (64 aa)). The short motif at 228 to 249 (GGWDRGEKIKKAALREVMEEGG) is the Nudix box element.

This sequence in the N-terminal section; belongs to the RxLR effector family. In the C-terminal section; belongs to the Nudix hydrolase family.

It is found in the secreted. The protein resides in the host cytoplasm. The protein localises to the host nucleus. Its subcellular location is the host nucleolus. In terms of biological role, effector that is involved in host plant infection. Contributes to virulence during the early infection stage, by inhibiting plant defense responses induced by both PAMP-triggered immunity (PTI) and effector-triggered immunity (ETI). This Phytophthora infestans (strain T30-4) (Potato late blight agent) protein is RxLR effector protein CRE5.